The chain runs to 290 residues: UPF0761 membrane protein YihY (290 aa).

6 helical membrane-spanning segments follow: residues 44 to 64 (LLSL…FPMF), 104 to 124 (VGAC…DSAL), 140 to 160 (FAVY…SLAI), 183 to 203 (IFPL…VPTI), 210 to 230 (AIVG…GFAL), and 244 to 264 (VLAV…IVLL).

This sequence belongs to the UPF0761 family.

The protein resides in the cell inner membrane. This is UPF0761 membrane protein YihY from Shigella boydii serotype 4 (strain Sb227).